The primary structure comprises 424 residues: Serine--tRNA ligase (424 aa).

230-232 (TAE) is an L-serine binding site. 261 to 263 (RSE) contacts ATP. Glu284 contacts L-serine. 348-351 (EISS) lines the ATP pocket. Ser384 lines the L-serine pocket.

Belongs to the class-II aminoacyl-tRNA synthetase family. Type-1 seryl-tRNA synthetase subfamily. As to quaternary structure, homodimer. The tRNA molecule binds across the dimer.

The protein resides in the cytoplasm. It catalyses the reaction tRNA(Ser) + L-serine + ATP = L-seryl-tRNA(Ser) + AMP + diphosphate + H(+). It carries out the reaction tRNA(Sec) + L-serine + ATP = L-seryl-tRNA(Sec) + AMP + diphosphate + H(+). It participates in aminoacyl-tRNA biosynthesis; selenocysteinyl-tRNA(Sec) biosynthesis; L-seryl-tRNA(Sec) from L-serine and tRNA(Sec): step 1/1. Catalyzes the attachment of serine to tRNA(Ser). Is also able to aminoacylate tRNA(Sec) with serine, to form the misacylated tRNA L-seryl-tRNA(Sec), which will be further converted into selenocysteinyl-tRNA(Sec). In Streptococcus pneumoniae (strain JJA), this protein is Serine--tRNA ligase.